The sequence spans 180 residues: Large ribosomal subunit protein uL5 (180 aa).

The protein belongs to the universal ribosomal protein uL5 family. As to quaternary structure, part of the 50S ribosomal subunit; part of the 5S rRNA/L5/L18/L25 subcomplex. Contacts the 5S rRNA and the P site tRNA. Forms a bridge to the 30S subunit in the 70S ribosome.

Its function is as follows. This is one of the proteins that bind and probably mediate the attachment of the 5S RNA into the large ribosomal subunit, where it forms part of the central protuberance. In the 70S ribosome it contacts protein S13 of the 30S subunit (bridge B1b), connecting the 2 subunits; this bridge is implicated in subunit movement. Contacts the P site tRNA; the 5S rRNA and some of its associated proteins might help stabilize positioning of ribosome-bound tRNAs. The chain is Large ribosomal subunit protein uL5 from Heliobacterium modesticaldum (strain ATCC 51547 / Ice1).